The primary structure comprises 622 residues: 1-deoxy-D-xylulose-5-phosphate synthase (622 aa).

Thiamine diphosphate contacts are provided by residues His80 and 121 to 123 (GHS). Asp152 is a Mg(2+) binding site. Thiamine diphosphate contacts are provided by residues 153 to 154 (GA), Asn181, Tyr288, and Glu370. A Mg(2+)-binding site is contributed by Asn181.

The protein belongs to the transketolase family. DXPS subfamily. In terms of assembly, homodimer. Mg(2+) is required as a cofactor. Thiamine diphosphate serves as cofactor.

It carries out the reaction D-glyceraldehyde 3-phosphate + pyruvate + H(+) = 1-deoxy-D-xylulose 5-phosphate + CO2. It functions in the pathway metabolic intermediate biosynthesis; 1-deoxy-D-xylulose 5-phosphate biosynthesis; 1-deoxy-D-xylulose 5-phosphate from D-glyceraldehyde 3-phosphate and pyruvate: step 1/1. Functionally, catalyzes the acyloin condensation reaction between C atoms 2 and 3 of pyruvate and glyceraldehyde 3-phosphate to yield 1-deoxy-D-xylulose-5-phosphate (DXP). This Shewanella oneidensis (strain ATCC 700550 / JCM 31522 / CIP 106686 / LMG 19005 / NCIMB 14063 / MR-1) protein is 1-deoxy-D-xylulose-5-phosphate synthase.